The sequence spans 176 residues: MALLPILSFPDPRLRTIAKPVEEVTDEIRQLAADMFETMYAAPGIGLAASQVDRHIQLIVMDLSESKDEPMVFINPKVTPLTEETQPYEEGCLSVPQIYDKVDRPSRVKIEAINLEGQAFEIEADGLLAVCIQHEMDHLNGKLFVDYLSPLKRQRVREKVEKIVRQREREKVAVKR.

Positions 92 and 134 each coordinate Fe cation. Glu-135 is an active-site residue. Residue His-138 coordinates Fe cation.

It belongs to the polypeptide deformylase family. The cofactor is Fe(2+).

The enzyme catalyses N-terminal N-formyl-L-methionyl-[peptide] + H2O = N-terminal L-methionyl-[peptide] + formate. Removes the formyl group from the N-terminal Met of newly synthesized proteins. Requires at least a dipeptide for an efficient rate of reaction. N-terminal L-methionine is a prerequisite for activity but the enzyme has broad specificity at other positions. The chain is Peptide deformylase from Acinetobacter baumannii (strain SDF).